A 430-amino-acid polypeptide reads, in one-letter code: 3-phosphoshikimate 1-carboxyvinyltransferase (430 aa).

The 3-phosphoshikimate site is built by K23, S24, and R28. K23 contributes to the phosphoenolpyruvate binding site. The phosphoenolpyruvate site is built by G95 and R123. 3-phosphoshikimate contacts are provided by S169, Q171, D315, and K342. Q171 lines the phosphoenolpyruvate pocket. Catalysis depends on D315, which acts as the Proton acceptor. Phosphoenolpyruvate contacts are provided by R346 and R388.

Belongs to the EPSP synthase family. As to quaternary structure, monomer.

It is found in the cytoplasm. It carries out the reaction 3-phosphoshikimate + phosphoenolpyruvate = 5-O-(1-carboxyvinyl)-3-phosphoshikimate + phosphate. The protein operates within metabolic intermediate biosynthesis; chorismate biosynthesis; chorismate from D-erythrose 4-phosphate and phosphoenolpyruvate: step 6/7. Its function is as follows. Catalyzes the transfer of the enolpyruvyl moiety of phosphoenolpyruvate (PEP) to the 5-hydroxyl of shikimate-3-phosphate (S3P) to produce enolpyruvyl shikimate-3-phosphate and inorganic phosphate. The sequence is that of 3-phosphoshikimate 1-carboxyvinyltransferase from Streptococcus pyogenes serotype M2 (strain MGAS10270).